A 463-amino-acid chain; its full sequence is Asparagine--tRNA ligase (463 aa).

This sequence belongs to the class-II aminoacyl-tRNA synthetase family. As to quaternary structure, homodimer.

It is found in the cytoplasm. The enzyme catalyses tRNA(Asn) + L-asparagine + ATP = L-asparaginyl-tRNA(Asn) + AMP + diphosphate + H(+). The sequence is that of Asparagine--tRNA ligase from Clostridium botulinum (strain Langeland / NCTC 10281 / Type F).